Here is a 131-residue protein sequence, read N- to C-terminus: Small ribosomal subunit protein uS11 (131 aa).

This sequence belongs to the universal ribosomal protein uS11 family. As to quaternary structure, part of the 30S ribosomal subunit. Interacts with proteins S7 and S18. Binds to IF-3.

Located on the platform of the 30S subunit, it bridges several disparate RNA helices of the 16S rRNA. Forms part of the Shine-Dalgarno cleft in the 70S ribosome. This is Small ribosomal subunit protein uS11 from Syntrophotalea carbinolica (strain DSM 2380 / NBRC 103641 / GraBd1) (Pelobacter carbinolicus).